We begin with the raw amino-acid sequence, 474 residues long: tRNA-2-methylthio-N(6)-dimethylallyladenosine synthase (474 aa).

Residues 3–120 (KKLHIKTWGC…LPEMINSVRG (118 aa)) form the MTTase N-terminal domain. Cys12, Cys49, Cys83, Cys157, Cys161, and Cys164 together coordinate [4Fe-4S] cluster. A Radical SAM core domain is found at 143–375 (RAEGPTAFVS…QERINQQAMA (233 aa)). The 64-residue stretch at 378–441 (RRMLGTTQRI…PNSLRGKVVR (64 aa)) folds into the TRAM domain.

Belongs to the methylthiotransferase family. MiaB subfamily. In terms of assembly, monomer. The cofactor is [4Fe-4S] cluster.

It localises to the cytoplasm. It catalyses the reaction N(6)-dimethylallyladenosine(37) in tRNA + (sulfur carrier)-SH + AH2 + 2 S-adenosyl-L-methionine = 2-methylsulfanyl-N(6)-dimethylallyladenosine(37) in tRNA + (sulfur carrier)-H + 5'-deoxyadenosine + L-methionine + A + S-adenosyl-L-homocysteine + 2 H(+). Catalyzes the methylthiolation of N6-(dimethylallyl)adenosine (i(6)A), leading to the formation of 2-methylthio-N6-(dimethylallyl)adenosine (ms(2)i(6)A) at position 37 in tRNAs that read codons beginning with uridine. The protein is tRNA-2-methylthio-N(6)-dimethylallyladenosine synthase of Salmonella enteritidis PT4 (strain P125109).